The primary structure comprises 279 residues: Shikimate dehydrogenase (NADP(+)) (279 aa).

Shikimate-binding positions include 21–23 (SMS) and threonine 68. The active-site Proton acceptor is the lysine 72. Residues asparagine 93 and aspartate 108 each contribute to the shikimate site. Residues 130 to 134 (GAGGA) and leucine 219 each bind NADP(+). Residue tyrosine 221 coordinates shikimate. NADP(+) is bound at residue glycine 242.

This sequence belongs to the shikimate dehydrogenase family. As to quaternary structure, homodimer.

The catalysed reaction is shikimate + NADP(+) = 3-dehydroshikimate + NADPH + H(+). It participates in metabolic intermediate biosynthesis; chorismate biosynthesis; chorismate from D-erythrose 4-phosphate and phosphoenolpyruvate: step 4/7. Involved in the biosynthesis of the chorismate, which leads to the biosynthesis of aromatic amino acids. Catalyzes the reversible NADPH linked reduction of 3-dehydroshikimate (DHSA) to yield shikimate (SA). In Oleidesulfovibrio alaskensis (strain ATCC BAA-1058 / DSM 17464 / G20) (Desulfovibrio alaskensis), this protein is Shikimate dehydrogenase (NADP(+)).